Here is a 255-residue protein sequence, read N- to C-terminus: tRNA (guanine-N(7)-)-methyltransferase (255 aa).

S-adenosyl-L-methionine contacts are provided by Glu64, Glu89, Asp116, and Asp138. Asp138 is an active-site residue. Substrate is bound by residues Lys142, Asp174, and 212–215 (TRYE).

Belongs to the class I-like SAM-binding methyltransferase superfamily. TrmB family.

It carries out the reaction guanosine(46) in tRNA + S-adenosyl-L-methionine = N(7)-methylguanosine(46) in tRNA + S-adenosyl-L-homocysteine. It participates in tRNA modification; N(7)-methylguanine-tRNA biosynthesis. In terms of biological role, catalyzes the formation of N(7)-methylguanine at position 46 (m7G46) in tRNA. The chain is tRNA (guanine-N(7)-)-methyltransferase from Rhodospirillum rubrum (strain ATCC 11170 / ATH 1.1.1 / DSM 467 / LMG 4362 / NCIMB 8255 / S1).